The chain runs to 695 residues: Spermidine/spermine N(1)-acetyltransferase-like protein 1 (695 aa).

3 stretches are compositionally biased toward polar residues: residues 1 to 39, 52 to 68, and 78 to 98; these read MNQS…QGSA, PSMS…NLPD, and DTWQ…SQLV. 4 disordered regions span residues 1–274, 290–332, 344–375, and 387–493; these read MNQS…MNQM, DMKQ…PGMW, ASIS…NQSG, and RQSG…GLSQ. Low complexity predominate over residues 105–122; that stretch reads SQPDPSQPGPSQSGPSQS. Polar residues-rich tracts occupy residues 123–179, 197–208, 231–266, 294–310, 355–375, 389–422, and 459–471; these read RMRQ…TGLS, GVQQPGISQQVP, PDTS…QPSP, PSMS…NLPD, APSQ…NQSG, SGGS…TGLS, and PGTS…QTGM. An N-acetyltransferase domain is found at 529-695; sequence FQIRHAEAGD…EELLDMAWEE (167 aa). A substrate-binding site is contributed by 552–553; sequence CE. Acetyl-CoA-binding positions include 618–620 and 626–631; these read FYV and GLGIGA. Substrate contacts are provided by residues 650–652 and Glu676; that span reads HFL.

Belongs to the acetyltransferase family.

This chain is Spermidine/spermine N(1)-acetyltransferase-like protein 1 (SATL1), found in Homo sapiens (Human).